Consider the following 271-residue polypeptide: Acetyl-coenzyme A carboxylase carboxyl transferase subunit beta (271 aa).

The CoA carboxyltransferase N-terminal domain occupies 21–271; the sequence is LWIQCPYCKQ…LGDLLALHTA (251 aa). Zn(2+)-binding residues include cysteine 25, cysteine 28, cysteine 43, and cysteine 46. A C4-type zinc finger spans residues 25–46; that stretch reads CPYCKQGSYRESLGNAQVCPHC.

This sequence belongs to the AccD/PCCB family. In terms of assembly, acetyl-CoA carboxylase is a heterohexamer composed of biotin carboxyl carrier protein (AccB), biotin carboxylase (AccC) and two subunits each of ACCase subunit alpha (AccA) and ACCase subunit beta (AccD). Zn(2+) serves as cofactor.

The protein localises to the cytoplasm. It carries out the reaction N(6)-carboxybiotinyl-L-lysyl-[protein] + acetyl-CoA = N(6)-biotinyl-L-lysyl-[protein] + malonyl-CoA. Its pathway is lipid metabolism; malonyl-CoA biosynthesis; malonyl-CoA from acetyl-CoA: step 1/1. In terms of biological role, component of the acetyl coenzyme A carboxylase (ACC) complex. Biotin carboxylase (BC) catalyzes the carboxylation of biotin on its carrier protein (BCCP) and then the CO(2) group is transferred by the transcarboxylase to acetyl-CoA to form malonyl-CoA. This is Acetyl-coenzyme A carboxylase carboxyl transferase subunit beta from Lacticaseibacillus casei (strain BL23) (Lactobacillus casei).